The sequence spans 744 residues: Cytosolic neutral trehalase (744 aa).

Residues aspartate 99, aspartate 101, asparagine 103, glutamine 105, and aspartate 110 each coordinate Ca(2+). Substrate-binding positions include arginine 286, 293-294, asparagine 330, 339-341, glutamate 406, arginine 455, and glycine 458; these read WD and RSQ. Catalysis depends on proton donor/acceptor residues aspartate 460 and glutamate 665.

Belongs to the glycosyl hydrolase 37 family. Ca(2+) is required as a cofactor.

Its subcellular location is the cytoplasm. It catalyses the reaction alpha,alpha-trehalose + H2O = alpha-D-glucose + beta-D-glucose. It participates in carbohydrate degradation. In terms of biological role, hydrolyzes intracellular trehalose to glucose. In Neurospora crassa (strain ATCC 24698 / 74-OR23-1A / CBS 708.71 / DSM 1257 / FGSC 987), this protein is Cytosolic neutral trehalase.